A 196-amino-acid polypeptide reads, in one-letter code: Putative NADH dehydrogenase/NAD(P)H nitroreductase Reut_A1586 (196 aa).

The protein belongs to the nitroreductase family. HadB/RutE subfamily. Requires FMN as cofactor.

In Cupriavidus pinatubonensis (strain JMP 134 / LMG 1197) (Cupriavidus necator (strain JMP 134)), this protein is Putative NADH dehydrogenase/NAD(P)H nitroreductase Reut_A1586.